The chain runs to 48 residues: M-oxotoxin-Ot1b (48 aa).

It localises to the secreted. Its subcellular location is the target cell membrane. In terms of biological role, disrupts cell membranes, particularly those rich in phosphocholine, through formation of pores. Has antimicrobial activity, hemolytic activity and insecticidal activity. This Oxyopes takobius (Lynx spider) protein is M-oxotoxin-Ot1b.